The primary structure comprises 162 residues: EF-hand calcium-binding domain-containing protein 11 (162 aa).

3 consecutive EF-hand domains span residues 18–53 (SERR…LFGY), 91–126 (LYRN…VAPK), and 127–162 (LPAR…GQSK). D140, D142, D144, H146, and D151 together coordinate Ca(2+).

The sequence is that of EF-hand calcium-binding domain-containing protein 11 (Efcab11) from Mus musculus (Mouse).